A 322-amino-acid chain; its full sequence is Lipoyl synthase (322 aa).

The segment covering 1–12 (MVTVLNTVNQSG) has biased composition (polar residues). The interval 1 to 22 (MVTVLNTVNQSGRLRHPEKAHR) is disordered. The [4Fe-4S] cluster site is built by C60, C65, C71, C86, C90, C93, and S299. One can recognise a Radical SAM core domain in the interval 72-288 (WEKKHATFMI…ETIGKTKGFL (217 aa)).

Belongs to the radical SAM superfamily. Lipoyl synthase family. The cofactor is [4Fe-4S] cluster.

Its subcellular location is the cytoplasm. The catalysed reaction is [[Fe-S] cluster scaffold protein carrying a second [4Fe-4S](2+) cluster] + N(6)-octanoyl-L-lysyl-[protein] + 2 oxidized [2Fe-2S]-[ferredoxin] + 2 S-adenosyl-L-methionine + 4 H(+) = [[Fe-S] cluster scaffold protein] + N(6)-[(R)-dihydrolipoyl]-L-lysyl-[protein] + 4 Fe(3+) + 2 hydrogen sulfide + 2 5'-deoxyadenosine + 2 L-methionine + 2 reduced [2Fe-2S]-[ferredoxin]. It functions in the pathway protein modification; protein lipoylation via endogenous pathway; protein N(6)-(lipoyl)lysine from octanoyl-[acyl-carrier-protein]: step 2/2. Its function is as follows. Catalyzes the radical-mediated insertion of two sulfur atoms into the C-6 and C-8 positions of the octanoyl moiety bound to the lipoyl domains of lipoate-dependent enzymes, thereby converting the octanoylated domains into lipoylated derivatives. This chain is Lipoyl synthase, found in Brucella abortus (strain S19).